The following is an 83-amino-acid chain: Exodeoxyribonuclease 7 small subunit (83 aa).

This sequence belongs to the XseB family. In terms of assembly, heterooligomer composed of large and small subunits.

Its subcellular location is the cytoplasm. It catalyses the reaction Exonucleolytic cleavage in either 5'- to 3'- or 3'- to 5'-direction to yield nucleoside 5'-phosphates.. In terms of biological role, bidirectionally degrades single-stranded DNA into large acid-insoluble oligonucleotides, which are then degraded further into small acid-soluble oligonucleotides. The protein is Exodeoxyribonuclease 7 small subunit of Novosphingobium aromaticivorans (strain ATCC 700278 / DSM 12444 / CCUG 56034 / CIP 105152 / NBRC 16084 / F199).